The chain runs to 248 residues: 2,3-bisphosphoglycerate-dependent phosphoglycerate mutase (248 aa).

Substrate-binding positions include 10–17 (RHGQSEWN), 23–24 (TG), Arg-62, 89–92 (ERHY), Lys-100, 116–117 (RR), and 183–184 (GN). His-11 acts as the Tele-phosphohistidine intermediate in catalysis. Glu-89 serves as the catalytic Proton donor/acceptor.

Belongs to the phosphoglycerate mutase family. BPG-dependent PGAM subfamily.

The enzyme catalyses (2R)-2-phosphoglycerate = (2R)-3-phosphoglycerate. The protein operates within carbohydrate degradation; glycolysis; pyruvate from D-glyceraldehyde 3-phosphate: step 3/5. Functionally, catalyzes the interconversion of 2-phosphoglycerate and 3-phosphoglycerate. The protein is 2,3-bisphosphoglycerate-dependent phosphoglycerate mutase of Corynebacterium glutamicum (strain ATCC 13032 / DSM 20300 / JCM 1318 / BCRC 11384 / CCUG 27702 / LMG 3730 / NBRC 12168 / NCIMB 10025 / NRRL B-2784 / 534).